Here is a 405-residue protein sequence, read N- to C-terminus: uncharacterized protein (405 aa).

Transmembrane regions (helical) follow at residues 3–23 (IIAKIPAWMLLCLFILSPTTE), 42–62 (GITQTTSTLYFLGFALGILTL), 73–93 (PIALLGLFIYVISSIISIFAV), 95–115 (IEMLMIARFVQAFGVSVGSVI), 135–155 (SLSPWLLFIPSLGSSIGGYII), 162–182 (YVFVFFSLTGTILLALYYKVL), 209–229 (ILWLYAFIIGAFNGIYYGFFI), 248–268 (KLAFLLSFAAIFGGFLGGYLI), 280–300 (GLGFIFSLCGCILFAVNAFIL), 309–329 (LAIAMIFVPMMIHMVGHNLLI), 346–366 (TAGSIFGAIYYVVIAAVTYLV), and 377–397 (FALLCFVLSISSAISFYCIWV).

It belongs to the major facilitator superfamily. Bcr/CmlA family.

It is found in the cell inner membrane. This is an uncharacterized protein from Rickettsia felis (strain ATCC VR-1525 / URRWXCal2) (Rickettsia azadi).